The chain runs to 96 residues: RxLR effector protein PITG_11507 (96 aa).

The N-terminal stretch at 1–19 (MRLSFIIVAVSLLAGGSGA) is a signal peptide. The segment at 27-59 (SDVLTSRGTNEGARTGKRSLRYDSNVERTGEED) is disordered. Positions 44 to 59 (RSLRYDSNVERTGEED) match the RxLR-dEER motif. Residues 46–55 (LRYDSNVERT) are compositionally biased toward basic and acidic residues.

The protein belongs to the RxLR effector family.

It localises to the secreted. It is found in the host nucleus. Its subcellular location is the host cytoplasm. Its function is as follows. Effector that enhances P.infestans colonization of Nicotiana benthamiana leaves. The protein is RxLR effector protein PITG_11507 of Phytophthora infestans (strain T30-4) (Potato late blight agent).